The sequence spans 214 residues: Large ribosomal subunit protein uL2my, C-terminal part (214 aa).

A mitochondrion-targeting transit peptide spans 1–30 (MSGLVALCRARASASSSLFNSVIRPAFRNF). The interval 157–214 (VAMNPCDHPHGGGEGKSKSSGSRGRTSVSPWGKPCKGGYKSASVKKKKKRLAEAAAKM) is disordered. Positions 163 to 173 (DHPHGGGEGKS) are enriched in basic and acidic residues. Low complexity predominate over residues 174-185 (KSSGSRGRTSVS).

It belongs to the universal ribosomal protein uL2 family. As to quaternary structure, component of the mitochondrial ribosome large subunit.

The protein resides in the mitochondrion. The protein is Large ribosomal subunit protein uL2my, C-terminal part of Arabidopsis thaliana (Mouse-ear cress).